The following is a 152-amino-acid chain: Transcriptional regulator MraZ (152 aa).

SpoVT-AbrB domains lie at 5–52 (INAI…TAAQ) and 81–124 (ATDV…NKEL).

It belongs to the MraZ family. As to quaternary structure, forms oligomers.

Its subcellular location is the cytoplasm. The protein localises to the nucleoid. The protein is Transcriptional regulator MraZ of Legionella pneumophila (strain Paris).